Here is a 66-residue protein sequence, read N- to C-terminus: Toxin Tppa2 (66 aa).

In terms of domain architecture, LCN-type CS-alpha/beta spans 1–63 (KDGYLVGNDG…TWSRATNKCG (63 aa)). 4 cysteine pairs are disulfide-bonded: Cys-11–Cys-62, Cys-15–Cys-37, Cys-23–Cys-43, and Cys-27–Cys-45. Cys-62 is subject to Cysteine amide.

Belongs to the long (4 C-C) scorpion toxin superfamily. Sodium channel inhibitor family. Beta subfamily. As to expression, expressed by the venom gland.

The protein resides in the secreted. Beta toxins bind voltage-independently at site-4 of sodium channels (Nav) and shift the voltage of activation toward more negative potentials thereby affecting sodium channel activation and promoting spontaneous and repetitive firing. The chain is Toxin Tppa2 from Tityus pachyurus (Colombian scorpion).